The following is a 989-amino-acid chain: Atos homolog protein A (989 aa).

Positions 24–32 (TLLITEGRT) are transactivation domain 1 (TAD1). Disordered regions lie at residues 244-295 (GEGG…LPPG), 393-477 (PDAL…KPAT), 525-639 (QNEQ…GLTQ), and 656-686 (EAEKHVRDGSTCLEKDENQEPHSSLSSTPAN). Over residues 254 to 270 (RSSLRLPRSPLFSRSLH) the composition is skewed to low complexity. Positions 397 to 412 (FTSQEPPGHKTTWNST) are enriched in polar residues. Basic and acidic residues-rich tracts occupy residues 413–423 (QDKECLKKSKD) and 460–471 (TRLDRVDRESKT). Composition is skewed to polar residues over residues 525–544 (QNEQVGSNHGAQTNGFVSLS) and 600–638 (TKSQPLTASNHQHYVSRESWTSLKNNSSHASSPQENGLT). Over residues 656-675 (EAEKHVRDGSTCLEKDENQE) the composition is skewed to basic and acidic residues. Positions 676 to 686 (PHSSLSSTPAN) are enriched in polar residues. The interval 792–849 (LLGNFEECVLNYRLEPLGTVEGFTAEVGASGTFCPSHMTLPVDVSFYSVSDDNAPSPY) is required for macropage invasion. The interval 876-884 (FNPNKTVVK) is transactivation domain 2 (TAD2).

Belongs to the ATOS family.

It localises to the nucleus. Its function is as follows. Transcription regulator that syncronizes transcriptional and translational programs to promote macrophage invasion of tissues. The polypeptide is Atos homolog protein A (atosa) (Danio rerio (Zebrafish)).